Here is a 556-residue protein sequence, read N- to C-terminus: Double-strand-break repair protein rad21-like protein 1 (556 aa).

It belongs to the rad21 family. In terms of assembly, component of some meiotic cohesin complex composed of the SMC1 (SMC1A or SMC1B) and SMC3 heterodimer attached via their hinge domain, RAD21L which link them, and STAG3.

It is found in the nucleus. The protein localises to the chromosome. In terms of biological role, meiosis-specific component of some cohesin complex required during the initial steps of prophase I in male meiosis. Probably required during early meiosis in males for separation of sister chromatids and homologous chromosomes. Replaces RAD21 in premeiotic S phase (during early stages of prophase I), while RAD21 reappears in later stages of prophase I. Involved in synaptonemal complex assembly, synapsis initiation and crossover recombination between homologous chromosomes during prophase I. The sequence is that of Double-strand-break repair protein rad21-like protein 1 (RAD21L1) from Homo sapiens (Human).